A 261-amino-acid chain; its full sequence is Undecaprenyl-diphosphatase (261 aa).

The next 6 membrane-spanning stretches (helical) occupy residues 39-59, 76-96, 99-119, 173-193, 206-226, and 238-258; these read NVLLFDILVHLGTLVPLLIIF, LLIIAGTVPTALIGLGFKDFF, LFVSGSTLGIEFIITGLILWL, AAKFSFLLSIPAILGAAVLDL, IDLMPFIVGFFAAMLSGYFAV, and LTWFSYYVWILGVTILVLQAA.

The protein belongs to the UppP family.

It is found in the cell membrane. The enzyme catalyses di-trans,octa-cis-undecaprenyl diphosphate + H2O = di-trans,octa-cis-undecaprenyl phosphate + phosphate + H(+). Catalyzes the dephosphorylation of undecaprenyl diphosphate (UPP). Confers resistance to bacitracin. This Carboxydothermus hydrogenoformans (strain ATCC BAA-161 / DSM 6008 / Z-2901) protein is Undecaprenyl-diphosphatase.